A 195-amino-acid polypeptide reads, in one-letter code: ATP-dependent Clp protease proteolytic subunit (195 aa).

The active-site Nucleophile is the S98. H123 is a catalytic residue.

This sequence belongs to the peptidase S14 family. As to quaternary structure, fourteen ClpP subunits assemble into 2 heptameric rings which stack back to back to give a disk-like structure with a central cavity, resembling the structure of eukaryotic proteasomes.

The protein resides in the cytoplasm. The enzyme catalyses Hydrolysis of proteins to small peptides in the presence of ATP and magnesium. alpha-casein is the usual test substrate. In the absence of ATP, only oligopeptides shorter than five residues are hydrolyzed (such as succinyl-Leu-Tyr-|-NHMec, and Leu-Tyr-Leu-|-Tyr-Trp, in which cleavage of the -Tyr-|-Leu- and -Tyr-|-Trp bonds also occurs).. Cleaves peptides in various proteins in a process that requires ATP hydrolysis. Has a chymotrypsin-like activity. Plays a major role in the degradation of misfolded proteins. This Wolinella succinogenes (strain ATCC 29543 / DSM 1740 / CCUG 13145 / JCM 31913 / LMG 7466 / NCTC 11488 / FDC 602W) (Vibrio succinogenes) protein is ATP-dependent Clp protease proteolytic subunit.